The primary structure comprises 333 residues: MLTLTRIHTVSYEVRSTFLFISVLEFAVGFLTNAFVFLVNFWDVVKRQPLSNSDCVLLCLSISRLFLHGLLFLSAIQLTHFQKLSEPLNHSYQAINMLWMIANQANLWLAACLSLLYCSKLIRFSHTFLICLASWVSRKISQMLLGIILCSCICTVLCVWCFFSRPHFTVTTVLFMNNNTRLNWQIKDLNLFYSFLFCYLWSVPPFLLFLVSSGMLTVSLGRHMRTMKVYTRDSRDPSLEAHIKALKSLVSFFCFFVISSCAAFISVPLLILWRDKIGVMVCVGIMAACPSGHAAVLISGNAKLRRAVTTILLWAQSSLKVRADHKADSRTLC.

At 1 to 17 (MLTLTRIHTVSYEVRST) the chain is on the extracellular side. Residues 18-38 (FLFISVLEFAVGFLTNAFVFL) traverse the membrane as a helical segment. Residues 39-55 (VNFWDVVKRQPLSNSDC) are Cytoplasmic-facing. A helical membrane pass occupies residues 56-76 (VLLCLSISRLFLHGLLFLSAI). Over 77–94 (QLTHFQKLSEPLNHSYQA) the chain is Extracellular. The chain crosses the membrane as a helical span at residues 95 to 115 (INMLWMIANQANLWLAACLSL). Over 116–142 (LYCSKLIRFSHTFLICLASWVSRKISQ) the chain is Cytoplasmic. A helical transmembrane segment spans residues 143–163 (MLLGIILCSCICTVLCVWCFF). Residues 164-190 (SRPHFTVTTVLFMNNNTRLNWQIKDLN) are Extracellular-facing. A glycan (N-linked (GlcNAc...) asparagine) is linked at Asn-178. Residues 191–211 (LFYSFLFCYLWSVPPFLLFLV) form a helical membrane-spanning segment. Residues 212–251 (SSGMLTVSLGRHMRTMKVYTRDSRDPSLEAHIKALKSLVS) lie on the Cytoplasmic side of the membrane. Residues 252 to 272 (FFCFFVISSCAAFISVPLLIL) form a helical membrane-spanning segment. Over 273–276 (WRDK) the chain is Extracellular. Residues 277 to 297 (IGVMVCVGIMAACPSGHAAVL) traverse the membrane as a helical segment. Over 298 to 333 (ISGNAKLRRAVTTILLWAQSSLKVRADHKADSRTLC) the chain is Cytoplasmic.

Belongs to the G-protein coupled receptor T2R family.

It localises to the membrane. Its function is as follows. Receptor that may play a role in the perception of bitterness and is gustducin-linked. May play a role in sensing the chemical composition of the gastrointestinal content. The activity of this receptor may stimulate alpha gustducin, mediate PLC-beta-2 activation and lead to the gating of TRPM5. The chain is Taste receptor type 2 member 38 (TAS2R38) from Pan paniscus (Pygmy chimpanzee).